A 335-amino-acid chain; its full sequence is uncharacterized protein (335 aa).

This is an uncharacterized protein from Methanocaldococcus jannaschii (strain ATCC 43067 / DSM 2661 / JAL-1 / JCM 10045 / NBRC 100440) (Methanococcus jannaschii).